A 572-amino-acid chain; its full sequence is Glypican-5 (572 aa).

The signal sequence occupies residues 1–24 (MDAQTWPVGFRCLLLLALVGSARS). 2 N-linked (GlcNAc...) asparagine glycosylation sites follow: asparagine 120 and asparagine 237. Residues 355-375 (SPRCSFDQSKEKHGMKTTTRN) are disordered. 5 O-linked (Xyl...) (glycosaminoglycan) serine glycosylation sites follow: serine 441, serine 486, serine 495, serine 507, and serine 509. Asparagine 527 carries an N-linked (GlcNAc...) asparagine glycan.

Belongs to the glypican family. In terms of tissue distribution, in adult, primarily expressed in the brain. Also detected in fetal brain, lung and liver.

The protein localises to the cell membrane. It localises to the secreted. It is found in the extracellular space. Cell surface proteoglycan that bears heparan sulfate. In Homo sapiens (Human), this protein is Glypican-5 (GPC5).